Consider the following 212-residue polypeptide: MVARNQVAADNAISPAAEPRRRSEPSSSSSSSSPAAPVRPRPCPAVPAPAPGDTHFRTFRSHSDYRRITRTSALLDACGFYWGPLSVHGAHERLRAEPVGTFLVRDSRQRNCFFALSVKMASGPTSIRVHFQAGRFHLDGSRETFDCLFELLEHYVAAPRRMLGAPLRQRRVRPLQELCRQRIVAAVGRENLARIPLNPVLRDYLSSFPFQI.

Residues 1–55 (MVARNQVAADNAISPAAEPRRRSEPSSSSSSSSPAAPVRPRPCPAVPAPAPGDTH) are disordered. The span at 25-36 (PSSSSSSSSPAA) shows a compositional bias: low complexity. Over residues 37–50 (PVRPRPCPAVPAPA) the composition is skewed to pro residues. A kinase inhibitory region (KIR) region spans residues 56-67 (FRTFRSHSDYRR). The interval 68 to 79 (ITRTSALLDACG) is extended SH2 subdomain (ESS). Residues 80–175 (FYWGPLSVHG…PLRQRRVRPL (96 aa)) enclose the SH2 domain. The SOCS box domain maps to 162-211 (MLGAPLRQRRVRPLQELCRQRIVAAVGRENLARIPLNPVLRDYLSSFPFQ). The segment at 174 to 183 (PLQELCRQRI) is interaction with Elongin BC complex.

Belongs to the SOCS1 family. As to quaternary structure, interacts with multiple activated proteins of the tyrosine kinase signaling pathway including JAK family kinases, TEC, KIT, GRB2 and VAV. Binding to JAKs is mediated through the KIR and SH2 domain to a phosphorylated tyrosine residue within the JAK JH1 domain. Binds the SH3 domain of GRB2 via diproline determinants in the N-terminus, and the N-terminal regulatory domain of VAV. Interacts with the Elongin BC complex (ELOB and ELOC). Component of an ECS CBC(SOCS1) E3 ubiquitin-protein ligase complex which contains Elongin BC, CUL5, RBX1 and SOCS1. Interacts (via SH2 domain and SOCS box) with TRIM8. Interacts with CUL2. Interacts with AXL and FGFR3. Interacts with INSR. Interacts with TRIM8. Interacts with DCUN1D1. Interacts with IFNGR1. High expression in thymus. Lower expression in lung and spleen. Expressed in both Th1 and Th2 cells.

The protein resides in the nucleus. It localises to the cytoplasmic vesicle. The protein operates within protein modification; protein ubiquitination. Essential negative regulator of type I and type II interferon (IFN) signaling, as well as that of other cytokines, including IL2, IL4, IL6 and leukemia inhibitory factor (LIF). Downregulates cytokine signaling by inhibiting the JAK/STAT signaling pathway. Acts by binding to JAK proteins and to IFNGR1 and inhibiting their kinase activity. In vitro, suppresses Tec protein-tyrosine activity. Regulates IFN-gamma (IFNG)-mediated sensory neuron survival. Probable substrate recognition component of an ECS (Elongin BC-CUL2/5-SOCS-box protein) E3 ubiquitin ligase complex which mediates the ubiquitination and subsequent proteasomal degradation of target proteins. This is Suppressor of cytokine signaling 1 from Mus musculus (Mouse).